The primary structure comprises 1975 residues: Golgi-specific brefeldin A-resistance guanine nucleotide exchange factor 1 homolog (1975 aa).

Disordered regions lie at residues 216 to 243 (NPTE…EPEN) and 299 to 352 (ISAG…EEKM). Residues 221–230 (RQKRKKKRQL) show a composition bias toward basic residues. Residues 624-812 (QIIEQKKRKR…ADMYQAIKTE (189 aa)) form the SEC7 domain. Residues 1264–1277 (QSLRVGGDQQQQRM) show a composition bias toward polar residues. Disordered stretches follow at residues 1264–1318 (QSLR…DLES), 1447–1473 (DEKA…VTED), 1699–1751 (IKDT…ATAQ), 1788–1854 (VHSG…QYAY), and 1877–1975 (YANQ…QEKP). A compositionally biased stretch (basic and acidic residues) spans 1291–1309 (GAHEERAYTSEGEERRRGG). The span at 1451–1464 (VKKHHHHHHGHKKK) shows a compositional bias: basic residues. Residues 1734–1751 (SNSTAATSTSDPSIATAQ) show a composition bias toward low complexity. A compositionally biased stretch (pro residues) spans 1797 to 1808 (GSPPQTEPPASS). Composition is skewed to low complexity over residues 1820 to 1854 (YEQY…QYAY) and 1877 to 1894 (YANQ…QQQH). A compositionally biased stretch (polar residues) spans 1895–1909 (PVNPTSPSVHGQYSV). Low complexity predominate over residues 1938–1957 (TPPQNNAPALAPSAPTTTSA).

It localises to the golgi apparatus. It is found in the cis-Golgi network. The protein resides in the endoplasmic reticulum-Golgi intermediate compartment. Guanine-nucleotide exchange factor (GEF) for members of the Arf family of small GTPases involved in trafficking in the early secretory pathway; its GEF activity initiates the coating of nascent vesicles via the localized generation of activated ARFs through replacement of GDP with GTP. Also, plays a role in receptor-mediated endocytosis in oocytes and endosomal trafficking. Involved in vesicle retrograde transport from the ERGIC and cis-Golgi compartments to the endoplasmic reticulum (ER). Plays a role in maintaining mitochondrial morphology, network organization and function. May be required for the basolateral cell membrane localization of the serine threonine protein kinase sgk-1 in intestinal cells. In Caenorhabditis elegans, this protein is Golgi-specific brefeldin A-resistance guanine nucleotide exchange factor 1 homolog.